A 172-amino-acid polypeptide reads, in one-letter code: 3-hydroxydecanoyl-[acyl-carrier-protein] dehydratase (172 aa).

His71 is a catalytic residue.

This sequence belongs to the thioester dehydratase family. FabA subfamily. Homodimer.

The protein resides in the cytoplasm. It carries out the reaction a (3R)-hydroxyacyl-[ACP] = a (2E)-enoyl-[ACP] + H2O. The enzyme catalyses (3R)-hydroxydecanoyl-[ACP] = (2E)-decenoyl-[ACP] + H2O. The catalysed reaction is (2E)-decenoyl-[ACP] = (3Z)-decenoyl-[ACP]. It participates in lipid metabolism; fatty acid biosynthesis. Functionally, necessary for the introduction of cis unsaturation into fatty acids. Catalyzes the dehydration of (3R)-3-hydroxydecanoyl-ACP to E-(2)-decenoyl-ACP and then its isomerization to Z-(3)-decenoyl-ACP. Can catalyze the dehydratase reaction for beta-hydroxyacyl-ACPs with saturated chain lengths up to 16:0, being most active on intermediate chain length. The protein is 3-hydroxydecanoyl-[acyl-carrier-protein] dehydratase of Photorhabdus laumondii subsp. laumondii (strain DSM 15139 / CIP 105565 / TT01) (Photorhabdus luminescens subsp. laumondii).